The primary structure comprises 397 residues: Probable sugar efflux transporter (397 aa).

The next 12 membrane-spanning stretches (helical) occupy residues valine 15–leucine 35, valine 50–leucine 70, leucine 81–phenylalanine 101, valine 103–alanine 123, alanine 136–isoleucine 156, threonine 169–proline 189, proline 209–tyrosine 229, phenylalanine 246–glycine 266, proline 275–alanine 295, leucine 301–valine 321, valine 333–glycine 353, and threonine 364–phenylalanine 384.

Belongs to the major facilitator superfamily. SotB (TC 2.A.1.2) family.

It localises to the cell inner membrane. Its function is as follows. Involved in the efflux of sugars. The physiological role may be the reduction of the intracellular concentration of toxic sugars or sugar metabolites. The protein is Probable sugar efflux transporter of Citrobacter koseri (strain ATCC BAA-895 / CDC 4225-83 / SGSC4696).